Here is a 1035-residue protein sequence, read N- to C-terminus: Eukaryotic translation initiation factor 3 subunit A (1035 aa).

The stretch at 92-121 (LKKFIELAEKKVTEAQAKADEIQSSLESAA) forms a coiled coil. One can recognise a PCI domain in the interval 339 to 523 (MTKAASFVLL…GVLTFDTDVF (185 aa)). The stretch at 606-910 (ERRVIIEKKK…LRAKRAGLSE (305 aa)) forms a coiled coil. 2 stretches are compositionally biased toward basic and acidic residues: residues 619–632 (TDAL…EETR) and 809–901 (KAAE…EARL). Disordered regions lie at residues 619–649 (TDAL…QRLA) and 809–1035 (KAAE…QQNQ). Composition is skewed to low complexity over residues 943–953 (KEAAGGAAPEA) and 988–1004 (PPSQ…QTPP).

It belongs to the eIF-3 subunit A family. In terms of assembly, component of the eukaryotic translation initiation factor 3 (eIF-3) complex.

It localises to the cytoplasm. Functionally, RNA-binding component of the eukaryotic translation initiation factor 3 (eIF-3) complex, which is involved in protein synthesis of a specialized repertoire of mRNAs and, together with other initiation factors, stimulates binding of mRNA and methionyl-tRNAi to the 40S ribosome. The eIF-3 complex specifically targets and initiates translation of a subset of mRNAs involved in cell proliferation. This is Eukaryotic translation initiation factor 3 subunit A (tif32) from Emericella nidulans (strain FGSC A4 / ATCC 38163 / CBS 112.46 / NRRL 194 / M139) (Aspergillus nidulans).